Here is a 412-residue protein sequence, read N- to C-terminus: Phosphate-repressible acid phosphatase (412 aa).

The N-terminal stretch at 1–19 (MLTKQTLLAFVGALALATG) is a signal peptide. Asn-74, Asn-121, Asn-186, and Asn-208 each carry an N-linked (GlcNAc...) asparagine glycan. The active-site Proton donor is Asp-215. Asn-217, Asn-332, and Asn-343 each carry an N-linked (GlcNAc...) asparagine glycan.

The N-terminus is blocked.

The protein resides in the secreted. The enzyme catalyses a phosphate monoester + H2O = an alcohol + phosphate. The sequence is that of Phosphate-repressible acid phosphatase (PHOA) from Penicillium chrysogenum (Penicillium notatum).